Consider the following 162-residue polypeptide: NAD(P)H-quinone oxidoreductase subunit N (162 aa).

Belongs to the complex I NdhN subunit family. NDH-1 can be composed of about 15 different subunits; different subcomplexes with different compositions have been identified which probably have different functions.

It is found in the cellular thylakoid membrane. It carries out the reaction a plastoquinone + NADH + (n+1) H(+)(in) = a plastoquinol + NAD(+) + n H(+)(out). The enzyme catalyses a plastoquinone + NADPH + (n+1) H(+)(in) = a plastoquinol + NADP(+) + n H(+)(out). NDH-1 shuttles electrons from an unknown electron donor, via FMN and iron-sulfur (Fe-S) centers, to quinones in the respiratory and/or the photosynthetic chain. The immediate electron acceptor for the enzyme in this species is believed to be plastoquinone. Couples the redox reaction to proton translocation, and thus conserves the redox energy in a proton gradient. Cyanobacterial NDH-1 also plays a role in inorganic carbon-concentration. This chain is NAD(P)H-quinone oxidoreductase subunit N, found in Trichormus variabilis (strain ATCC 29413 / PCC 7937) (Anabaena variabilis).